A 214-amino-acid chain; its full sequence is Holliday junction branch migration complex subunit RuvA (214 aa).

The interval 1–68 (MIGFLQGKVL…QPKPVLIGFD (68 aa)) is domain I. Residues 69 to 146 (SAEEKDFFQL…RFLLAADEAG (78 aa)) are domain II. Residues 147-160 (AGDGVSKTGTPSLP) are flexible linker. Residues 161-214 (IQKAIDQVVDVLVQQLGHTPSAAKMMVAQALDRDPEIMTPEALFDEVYKGDVDA) form a domain III region.

This sequence belongs to the RuvA family. As to quaternary structure, homotetramer. Forms an RuvA(8)-RuvB(12)-Holliday junction (HJ) complex. HJ DNA is sandwiched between 2 RuvA tetramers; dsDNA enters through RuvA and exits via RuvB. An RuvB hexamer assembles on each DNA strand where it exits the tetramer. Each RuvB hexamer is contacted by two RuvA subunits (via domain III) on 2 adjacent RuvB subunits; this complex drives branch migration. In the full resolvosome a probable DNA-RuvA(4)-RuvB(12)-RuvC(2) complex forms which resolves the HJ.

The protein resides in the cytoplasm. In terms of biological role, the RuvA-RuvB-RuvC complex processes Holliday junction (HJ) DNA during genetic recombination and DNA repair, while the RuvA-RuvB complex plays an important role in the rescue of blocked DNA replication forks via replication fork reversal (RFR). RuvA specifically binds to HJ cruciform DNA, conferring on it an open structure. The RuvB hexamer acts as an ATP-dependent pump, pulling dsDNA into and through the RuvAB complex. HJ branch migration allows RuvC to scan DNA until it finds its consensus sequence, where it cleaves and resolves the cruciform DNA. This is Holliday junction branch migration complex subunit RuvA from Desulforapulum autotrophicum (strain ATCC 43914 / DSM 3382 / VKM B-1955 / HRM2) (Desulfobacterium autotrophicum).